A 293-amino-acid polypeptide reads, in one-letter code: MKIRIAARGSKLSRIQVDMLGEKLKKIGIEYEIIDIKTKADLFSTDPLSKLGKGVFEKEVNEAVLEGKADIAVHSMKDILSEINPSLEIFAVLERDPPYDILIAEKNLDKLDSNITIGTSSIRRKNFLKYIKPEINTKDIRGNVDTRIRKYLSKEYQGLILAEASLKRLNMTMNYHRLNVYDFTPEANQGIIVALGRKKDEKIKEIFKEINHKDTLDEALAERAVISLVGGGCHSPIGVLFKKEGKEFYGIASYSDGKKKITVSISKPGDPYTIGSELGLLLKKEMKNEDIIP.

S-(dipyrrolylmethanemethyl)cysteine is present on Cys-233.

The protein belongs to the HMBS family. Dipyrromethane is required as a cofactor.

The catalysed reaction is 4 porphobilinogen + H2O = hydroxymethylbilane + 4 NH4(+). Its pathway is porphyrin-containing compound metabolism; protoporphyrin-IX biosynthesis; coproporphyrinogen-III from 5-aminolevulinate: step 2/4. Its function is as follows. Tetrapolymerization of the monopyrrole PBG into the hydroxymethylbilane pre-uroporphyrinogen in several discrete steps. The chain is Probable porphobilinogen deaminase from Saccharolobus islandicus (strain Y.G.57.14 / Yellowstone #1) (Sulfolobus islandicus).